The sequence spans 505 residues: Glycerol kinase (505 aa).

Threonine 14 is a binding site for ADP. Residues threonine 14, threonine 15, and serine 16 each contribute to the ATP site. A sn-glycerol 3-phosphate-binding site is contributed by threonine 14. Arginine 18 lines the ADP pocket. 4 residues coordinate sn-glycerol 3-phosphate: arginine 84, glutamate 85, tyrosine 136, and aspartate 246. Glycerol contacts are provided by arginine 84, glutamate 85, tyrosine 136, aspartate 246, and glutamine 247. Residues threonine 268 and glycine 311 each coordinate ADP. ATP is bound by residues threonine 268, glycine 311, glutamine 315, and glycine 412. Residues glycine 412 and asparagine 416 each contribute to the ADP site.

The protein belongs to the FGGY kinase family.

The catalysed reaction is glycerol + ATP = sn-glycerol 3-phosphate + ADP + H(+). It participates in polyol metabolism; glycerol degradation via glycerol kinase pathway; sn-glycerol 3-phosphate from glycerol: step 1/1. Its activity is regulated as follows. Inhibited by fructose 1,6-bisphosphate (FBP). Its function is as follows. Key enzyme in the regulation of glycerol uptake and metabolism. Catalyzes the phosphorylation of glycerol to yield sn-glycerol 3-phosphate. The protein is Glycerol kinase of Vibrio cholerae serotype O1 (strain M66-2).